The chain runs to 713 residues: Ribosomal RNA large subunit methyltransferase K/L (713 aa).

The region spanning 43–154 is the THUMP domain; the sequence is LLYRALLWSR…RDQVMLSLDL (112 aa).

Belongs to the methyltransferase superfamily. RlmKL family.

Its subcellular location is the cytoplasm. The catalysed reaction is guanosine(2445) in 23S rRNA + S-adenosyl-L-methionine = N(2)-methylguanosine(2445) in 23S rRNA + S-adenosyl-L-homocysteine + H(+). The enzyme catalyses guanosine(2069) in 23S rRNA + S-adenosyl-L-methionine = N(2)-methylguanosine(2069) in 23S rRNA + S-adenosyl-L-homocysteine + H(+). Functionally, specifically methylates the guanine in position 2445 (m2G2445) and the guanine in position 2069 (m7G2069) of 23S rRNA. The protein is Ribosomal RNA large subunit methyltransferase K/L of Sodalis glossinidius (strain morsitans).